The chain runs to 120 residues: Small ribosomal subunit protein uS13 (120 aa).

The tract at residues 97 to 120 (PVRGQRTKTNARTRKGKKKTVGAK) is disordered.

This sequence belongs to the universal ribosomal protein uS13 family. In terms of assembly, part of the 30S ribosomal subunit. Forms a loose heterodimer with protein S19. Forms two bridges to the 50S subunit in the 70S ribosome.

Located at the top of the head of the 30S subunit, it contacts several helices of the 16S rRNA. In the 70S ribosome it contacts the 23S rRNA (bridge B1a) and protein L5 of the 50S subunit (bridge B1b), connecting the 2 subunits; these bridges are implicated in subunit movement. Contacts the tRNAs in the A and P-sites. This chain is Small ribosomal subunit protein uS13, found in Nitratiruptor sp. (strain SB155-2).